Here is a 413-residue protein sequence, read N- to C-terminus: Methylaspartate ammonia-lyase (413 aa).

Gln172 provides a ligand contact to (2S,3S)-3-methyl-L-aspartate. Mg(2+)-binding residues include Asp238, Glu273, and Asp307. (2S,3S)-3-methyl-L-aspartate is bound at residue Gln329. Lys331 (proton acceptor) is an active-site residue. Residue 360-361 (TC) participates in (2S,3S)-3-methyl-L-aspartate binding.

This sequence belongs to the methylaspartate ammonia-lyase family. In terms of assembly, homodimer. Requires Mg(2+) as cofactor.

The enzyme catalyses (2S,3S)-3-methyl-L-aspartate = mesaconate + NH4(+). The protein operates within amino-acid degradation; L-glutamate degradation via mesaconate pathway; acetate and pyruvate from L-glutamate: step 2/4. Functionally, involved in the methylaspartate cycle. Catalyzes the formation of the alpha,beta-unsaturated bond by the reversible anti elimination of ammonia from L-threo-beta-methylaspartate (L-threo-(2S,3S)-3-methylaspartate) to give mesaconate. The sequence is that of Methylaspartate ammonia-lyase from Citrobacter amalonaticus.